We begin with the raw amino-acid sequence, 262 residues long: Glycoprotein gp2 (262 aa).

The segment at 1 to 45 (RRGSPQGGSHTTPHPDRLTPSPDDTYDDDTNHPNGRNNSIEIVPQ) is disordered.

The protein localises to the virion membrane. Virulence factor. This Equus caballus (Horse) protein is Glycoprotein gp2.